The sequence spans 460 residues: EPD1-interacting receptor-like cytoplasmic serine/threonine-protein kinase 5D (460 aa).

Positions 83–364 (FSSANFLGEG…DVVNILEPLL (282 aa)) constitute a Protein kinase domain. Residues 89 to 97 (LGEGGFGPV) and K118 contribute to the ATP site. 2 positions are modified to phosphotyrosine: Y163 and Y165. D213 serves as the catalytic Proton acceptor.

It belongs to the protein kinase superfamily. Ser/Thr protein kinase family. Interacts with the V.dahliae elicitor EPD1 (AC G2WWH6). In terms of processing, phosphorylated at Tyr-163 and Tyr-165 in the presence of pathogen-associated molecular patterns (PAMPs); this triggers the expression of pathogenesis-related genes. Mostly expressed in roots and, to a lesser extent, in leaves.

It localises to the cell membrane. The catalysed reaction is L-seryl-[protein] + ATP = O-phospho-L-seryl-[protein] + ADP + H(+). It catalyses the reaction L-threonyl-[protein] + ATP = O-phospho-L-threonyl-[protein] + ADP + H(+). Required for pathogen-associated molecular pattern (PAMP, e.g. chitin and flg22)-triggered immunity (PTI) involving reactive oxygen species (ROS) accumulation and triggering plant defense, including defense-related gene expression (e.g. PR1 and LOX). Ensures specific recognition of the EPD1 effector of Verticillium dahliae, resulting in a hypersensitive response known as effector-triggered immunity (ETI), characterized by the activation of programmed cell death to limit infection by the pathogen. Priming plants with the incompatible pathogen V.dahliae leads to an increased resistance to compatible pathogens, as a result of systemic acquired resistance (SAR). This is EPD1-interacting receptor-like cytoplasmic serine/threonine-protein kinase 5D from Gossypium barbadense (Sea Island cotton).